A 126-amino-acid chain; its full sequence is C2H2-type zinc-finger transcription factor M5 (126 aa).

2 disordered regions span residues 17-52 (AQPDFEDWGDLGDLMPDVLPESNGSSSGTATDNDNR) and 103-126 (EKKSCNRVRRYSNGRERPRPRVKD). Over residues 38–48 (SNGSSSGTATD) the composition is skewed to polar residues. The segment at 51 to 76 (NRCWDHGCNGKKFLNHSNLVRHRREN) adopts a C2H2-type 1; degenerate zinc-finger fold. Residues 83 to 115 (FTCPMCGAYFSRSTARNQHLEKKSCNRVRRYSN) form a C2H2-type 2; degenerate zinc finger. The span at 115-126 (NGRERPRPRVKD) shows a compositional bias: basic and acidic residues.

It belongs to the GLI C2H2-type zinc-finger protein family.

It is found in the nucleus. Its function is as follows. Transcription factor that probably regulates the expression of the gene cluster that mediates the biosynthesis of squalestatin S1 (SQS1, also known as zaragozic acid A), a heavily oxidized fungal polyketide that offers potent cholesterol lowering activity by targeting squalene synthase (SS). The chain is C2H2-type zinc-finger transcription factor M5 from Phoma sp. (strain ATCC 20986 / MF5453).